The sequence spans 210 residues: Glutathione S-transferase P 1 (210 aa).

The 80-residue stretch at 1 to 80 (PEYTIIYFNA…LLARNHDLYG (80 aa)) folds into the GST N-terminal domain. Residues Y7, R13, W38, K44, 51 to 52 (QL), and 64 to 65 (QS) each bind glutathione. The GST C-terminal domain occupies 82-203 (NPREASLIDM…SSDAHKKRPI (122 aa)).

Belongs to the GST superfamily. Pi family. Homodimer.

The protein resides in the cytoplasm. Its subcellular location is the mitochondrion. It is found in the nucleus. The enzyme catalyses RX + glutathione = an S-substituted glutathione + a halide anion + H(+). Its function is as follows. Conjugation of reduced glutathione to a wide number of exogenous and endogenous hydrophobic electrophiles. The protein is Glutathione S-transferase P 1 of Bufo bufo (European toad).